A 243-amino-acid chain; its full sequence is Ubiquinone/menaquinone biosynthesis C-methyltransferase UbiE (243 aa).

S-adenosyl-L-methionine-binding positions include Thr-69, Asp-90, and 116–117; that span reads DA.

Belongs to the class I-like SAM-binding methyltransferase superfamily. MenG/UbiE family.

The enzyme catalyses a 2-demethylmenaquinol + S-adenosyl-L-methionine = a menaquinol + S-adenosyl-L-homocysteine + H(+). It catalyses the reaction a 2-methoxy-6-(all-trans-polyprenyl)benzene-1,4-diol + S-adenosyl-L-methionine = a 5-methoxy-2-methyl-3-(all-trans-polyprenyl)benzene-1,4-diol + S-adenosyl-L-homocysteine + H(+). The protein operates within quinol/quinone metabolism; menaquinone biosynthesis; menaquinol from 1,4-dihydroxy-2-naphthoate: step 2/2. It functions in the pathway cofactor biosynthesis; ubiquinone biosynthesis. Its function is as follows. Methyltransferase required for the conversion of demethylmenaquinol (DMKH2) to menaquinol (MKH2) and the conversion of 2-polyprenyl-6-methoxy-1,4-benzoquinol (DDMQH2) to 2-polyprenyl-3-methyl-6-methoxy-1,4-benzoquinol (DMQH2). This is Ubiquinone/menaquinone biosynthesis C-methyltransferase UbiE from Burkholderia ambifaria (strain MC40-6).